A 125-amino-acid chain; its full sequence is Small ribosomal subunit protein uS12m (125 aa).

Residues 1 to 27 are disordered; the sequence is MPTKNQLIRHGREEKRRTDRTRALDQC. Residues 10–23 show a composition bias toward basic and acidic residues; that stretch reads HGREEKRRTDRTRA.

It belongs to the universal ribosomal protein uS12 family.

The protein resides in the mitochondrion. Its function is as follows. Protein S12 is involved in the translation initiation step. This chain is Small ribosomal subunit protein uS12m (RPS12), found in Triticum aestivum (Wheat).